A 436-amino-acid chain; its full sequence is Trigger factor (436 aa).

The PPIase FKBP-type domain occupies 161–255 (DDVAIIDFKT…VKEVREKQLP (95 aa)).

The protein belongs to the FKBP-type PPIase family. Tig subfamily.

It is found in the cytoplasm. The catalysed reaction is [protein]-peptidylproline (omega=180) = [protein]-peptidylproline (omega=0). In terms of biological role, involved in protein export. Acts as a chaperone by maintaining the newly synthesized protein in an open conformation. Functions as a peptidyl-prolyl cis-trans isomerase. The sequence is that of Trigger factor from Akkermansia muciniphila (strain ATCC BAA-835 / DSM 22959 / JCM 33894 / BCRC 81048 / CCUG 64013 / CIP 107961 / Muc).